Reading from the N-terminus, the 458-residue chain is Transcription factor PCF5 (458 aa).

4 disordered regions span residues 1 to 103 (MGDA…RGPR), 159 to 182 (GAGA…ENSD), 278 to 299 (MFHH…TTQQ), and 424 to 458 (RLPA…ASHH). Residues 65–74 (RGGGGGGGGE) show a composition bias toward gly residues. In terms of domain architecture, TCP spans 89–147 (RKDRHSKVCTARGPRDRRVRLSAHTAIQFYDVQDRLGYDRPSKAVDWLIKNAKDAIDKL).

As to quaternary structure, forms homodimers and heterodimers.

It is found in the nucleus. Functionally, transcription activator. Binds the promoter core sequence 5'-GGNCC-3'. This chain is Transcription factor PCF5 (PCF5), found in Oryza sativa subsp. japonica (Rice).